Consider the following 299-residue polypeptide: UBX domain-containing protein 1 (299 aa).

Disordered regions lie at residues Ala-39–Pro-61, Lys-127–Glu-176, and Glu-191–Lys-218. Positions Asp-46–Pro-61 are enriched in low complexity. The stretch at Ala-111–Arg-179 forms a coiled coil. Residues Ala-128 to Glu-176 show a composition bias toward basic and acidic residues. The span at Pro-201–Pro-213 shows a compositional bias: low complexity. A UBX domain is found at Lys-218–Leu-295.

As to quaternary structure, interacts with cdc-48.1 (via N-terminus) and cdc-48.2 (via N-terminus) in vitro; the interaction with cdc-48.1 is not detected in vivo. As to expression, expressed in the germline (at protein level). Expressed in spermatocytes but not in mature sperm (at protein level). Ubiquitously expressed. Predominantly expressed in the spermatheca.

It localises to the cytoplasm. Its subcellular location is the perinuclear region. In terms of biological role, ubiquitin-binding protein which acts as an adapter for ATPase cdc-48.1 and/or cdc-48.2, conferring substrate specificity. Together with ubxn-2 and ubxn-3, plays a role in hermaphrodite spermatogenesis probably by promoting the degradation of sex determination terminal factor tra-1. This Caenorhabditis elegans protein is UBX domain-containing protein 1.